A 161-amino-acid polypeptide reads, in one-letter code: MSEDHHDEEQFDSAESGAAATFPKQCSALRKNEHVMIRGRPCKIVEMSTSKTGKHGHAKVHMVAIDIFTTKKLEDICPSTHNMDVPVVKRREYILMSIEDGFCSLMDPESCELKDDLKMPEGDLGNTIREALEKDEGSVLVQVVAACGEEAILGYKISTKE.

A Hypusine modification is found at Lys-54.

The protein belongs to the eIF-5A family. Post-translationally, lys-54 undergoes hypusination, a unique post-translational modification that consists in the addition of a butylamino group from spermidine to lysine side chain, leading to the formation of the unusual amino acid hypusine. eIF-5As are the only known proteins to undergo this modification, which is essential for their function. In terms of tissue distribution, expressed specifically in the germline in the distal region of gonads where germ cells actively proliferate.

It localises to the cytoplasm. Translation factor that promotes translation elongation and termination, particularly upon ribosome stalling at specific amino acid sequence contexts. Binds between the exit (E) and peptidyl (P) site of the ribosome and promotes rescue of stalled ribosome: specifically required for efficient translation of polyproline-containing peptides as well as other motifs that stall the ribosome. Acts as a ribosome quality control (RQC) cofactor by joining the RQC complex to facilitate peptidyl transfer during CAT tailing step. Required for mitotic germ cell proliferation, gametogenesis after entry into meiosis, and localization of the P granule component pgl-1 on P granules. This chain is Eukaryotic translation initiation factor 5A-1 (iff-1), found in Caenorhabditis elegans.